A 297-amino-acid polypeptide reads, in one-letter code: HTH-type transcriptional regulator ArgP (297 aa).

The region spanning 4 to 60 (PDYRTLQALDAVIRERGFERAAQKLCITQSAVSQRIKQLENLFGQPLLVRTIPPRPT) is the HTH lysR-type domain. Positions 21–40 (FERAAQKLCITQSAVSQRIK) form a DNA-binding region, H-T-H motif.

The protein belongs to the LysR transcriptional regulatory family. Homodimer.

In terms of biological role, controls the transcription of genes involved in arginine and lysine metabolism. This is HTH-type transcriptional regulator ArgP from Pectobacterium atrosepticum (strain SCRI 1043 / ATCC BAA-672) (Erwinia carotovora subsp. atroseptica).